A 270-amino-acid chain; its full sequence is Hydroxyethylthiazole kinase (270 aa).

A substrate-binding site is contributed by Met-47. 2 residues coordinate ATP: Arg-123 and Thr-169. Gly-196 is a binding site for substrate.

The protein belongs to the Thz kinase family. The cofactor is Mg(2+).

It catalyses the reaction 5-(2-hydroxyethyl)-4-methylthiazole + ATP = 4-methyl-5-(2-phosphooxyethyl)-thiazole + ADP + H(+). Its pathway is cofactor biosynthesis; thiamine diphosphate biosynthesis; 4-methyl-5-(2-phosphoethyl)-thiazole from 5-(2-hydroxyethyl)-4-methylthiazole: step 1/1. Catalyzes the phosphorylation of the hydroxyl group of 4-methyl-5-beta-hydroxyethylthiazole (THZ). The chain is Hydroxyethylthiazole kinase from Roseiflexus castenholzii (strain DSM 13941 / HLO8).